The primary structure comprises 453 residues: GTPase Der (453 aa).

2 consecutive EngA-type G domains span residues 3–178 (PKIA…PNNE) and 190–363 (LKLA…LECS). GTP contacts are provided by residues 9–16 (GRPNVGKS), 57–61 (DTGGV), 130–133 (NKVD), 196–203 (GRPNAGKS), 243–247 (DTAGI), and 308–311 (NKTD). The KH-like domain maps to 364-448 (TRINTGVLNR…PIRIRLRSSH (85 aa)).

Belongs to the TRAFAC class TrmE-Era-EngA-EngB-Septin-like GTPase superfamily. EngA (Der) GTPase family. As to quaternary structure, associates with the 50S ribosomal subunit.

In terms of biological role, GTPase that plays an essential role in the late steps of ribosome biogenesis. The polypeptide is GTPase Der (Lawsonia intracellularis (strain PHE/MN1-00)).